The chain runs to 201 residues: MSTEAQRVDDSPSTSGGSSDGDQRESVQQEPDREQVQPKKKEGKISSKTAAKLSTSAKRIQKELAEITLDPPPNCSAGPKGDNIYEWRSTILGPPGSVYEGGVFFLDITFSPDYPFKPPKVTFRTRIYHCNINSQGVICLDILKDNWSPALTISKVLLSICSLLTDCNPADPLVGSIATQYMTNRAEHDRMARQWTKRYAT.

Positions methionine 1–aspartate 10 are enriched in basic and acidic residues. A disordered region spans residues methionine 1–threonine 55. Serine 2 bears the N-acetylserine mark. Serine 11, serine 15, serine 18, and serine 19 each carry phosphoserine. The span at glycine 21 to isoleucine 45 shows a compositional bias: basic and acidic residues. A compositionally biased stretch (low complexity) spans serine 46–threonine 55. The region spanning threonine 55 to threonine 201 is the UBC core domain. Cysteine 139 acts as the Glycyl thioester intermediate in catalysis.

This sequence belongs to the ubiquitin-conjugating enzyme family. Autoubiquitinated.

It carries out the reaction S-ubiquitinyl-[E1 ubiquitin-activating enzyme]-L-cysteine + [E2 ubiquitin-conjugating enzyme]-L-cysteine = [E1 ubiquitin-activating enzyme]-L-cysteine + S-ubiquitinyl-[E2 ubiquitin-conjugating enzyme]-L-cysteine.. Its pathway is protein modification; protein ubiquitination. In terms of biological role, accepts ubiquitin from the E1 complex and catalyzes its covalent attachment to other proteins. In vitro catalyzes 'Lys-11'- and 'Lys-48'-, as well as 'Lys-63'-linked polyubiquitination. Catalyzes the ISGylation of influenza A virus NS1 protein. The polypeptide is Ubiquitin-conjugating enzyme E2 E2 (Ube2e2) (Mus musculus (Mouse)).